Consider the following 304-residue polypeptide: Probable 5-dehydro-4-deoxyglucarate dehydratase (304 aa).

The protein belongs to the DapA family.

The catalysed reaction is 5-dehydro-4-deoxy-D-glucarate + H(+) = 2,5-dioxopentanoate + CO2 + H2O. Its pathway is carbohydrate acid metabolism; D-glucarate degradation; 2,5-dioxopentanoate from D-glucarate: step 2/2. The sequence is that of Probable 5-dehydro-4-deoxyglucarate dehydratase from Arthrobacter sp. (strain FB24).